The chain runs to 356 residues: MTTTLQQRESVSLWEQFCQWVTSTNNRIYVGWFGTLMIPTLLTATTCFIIAFIAAPPVDIDGIREPVAGSLLYGNNIVSGAVVPSSNAIGLHFYPIWEAASLDEWLYNGGPYQLVIFHFLIGIFCYMGRQWELSYRLGMRPWICVAYSAPVSAATAVFLIYPIGQGSFSDGMPLGISGTFNFMFVFQAEHNILMHPFHMLGVAGVFGGSLFSAMHGSLVTSSLVRETTEIESQNYGYKFGQEEETYNIVAAHGYFGRLIFQYASFNNSRALHFFLGAWPVIGIWFTAMGVSTMAFNLNGFNFNQSILDSQGRVIGTWADVLNRAGIGMEVMHERNAHNFPLDLASAEPVSAPVING.

Transmembrane regions (helical) follow at residues 29–46 (YVGWFGTLMIPTLLTATT), 118–133 (HFLIGIFCYMGRQWEL), and 142–156 (WICVAYSAPVSAATA). Position 118 (H118) interacts with chlorophyll a. Y126 contacts pheophytin a. 2 residues coordinate [CaMn4O5] cluster: D170 and E189. Residues 197–218 (FHMLGVAGVFGGSLFSAMHGSL) form a helical membrane-spanning segment. Residue H198 participates in chlorophyll a binding. Residues H215 and 264–265 (SF) contribute to the a quinone site. Position 215 (H215) interacts with Fe cation. Residue H272 coordinates Fe cation. The chain crosses the membrane as a helical span at residues 274–288 (FLGAWPVIGIWFTAM). H332, E333, D342, and A344 together coordinate [CaMn4O5] cluster. Residues 345–356 (SAEPVSAPVING) constitute a propeptide that is removed on maturation.

The protein belongs to the reaction center PufL/M/PsbA/D family. As to quaternary structure, PSII is composed of 1 copy each of membrane proteins PsbA, PsbB, PsbC, PsbD, PsbE, PsbF, PsbH, PsbI, PsbJ, PsbK, PsbL, PsbM, PsbT, PsbX, PsbY, PsbZ, Psb30/Ycf12, peripheral proteins PsbO, CyanoQ (PsbQ), PsbU, PsbV and a large number of cofactors. It forms dimeric complexes. It depends on The D1/D2 heterodimer binds P680, chlorophylls that are the primary electron donor of PSII, and subsequent electron acceptors. It shares a non-heme iron and each subunit binds pheophytin, quinone, additional chlorophylls, carotenoids and lipids. D1 provides most of the ligands for the Mn4-Ca-O5 cluster of the oxygen-evolving complex (OEC). There is also a Cl(-1) ion associated with D1 and D2, which is required for oxygen evolution. The PSII complex binds additional chlorophylls, carotenoids and specific lipids. as a cofactor. Post-translationally, tyr-161 forms a radical intermediate that is referred to as redox-active TyrZ, YZ or Y-Z. In terms of processing, C-terminally processed by CtpA; processing is essential to allow assembly of the oxygen-evolving complex and thus photosynthetic growth.

It localises to the cellular thylakoid membrane. The catalysed reaction is 2 a plastoquinone + 4 hnu + 2 H2O = 2 a plastoquinol + O2. Its function is as follows. Photosystem II (PSII) is a light-driven water:plastoquinone oxidoreductase that uses light energy to abstract electrons from H(2)O, generating O(2) and a proton gradient subsequently used for ATP formation. It consists of a core antenna complex that captures photons, and an electron transfer chain that converts photonic excitation into a charge separation. The D1/D2 (PsbA/PsbD) reaction center heterodimer binds P680, the primary electron donor of PSII as well as several subsequent electron acceptors. This Crocosphaera subtropica (strain ATCC 51142 / BH68) (Cyanothece sp. (strain ATCC 51142)) protein is Photosystem II protein D1.